The chain runs to 392 residues: Homoserine O-acetyltransferase (392 aa).

The AB hydrolase-1 domain occupies Asn52–Glu356. The active-site Nucleophile is the Ser157. Arg227 contacts substrate. Residues Asp320 and His350 contribute to the active site. Asp351 lines the substrate pocket. The tract at residues Ser373–Arg392 is disordered.

Belongs to the AB hydrolase superfamily. MetX family. As to quaternary structure, homodimer.

The protein resides in the cytoplasm. It catalyses the reaction L-homoserine + acetyl-CoA = O-acetyl-L-homoserine + CoA. It participates in amino-acid biosynthesis; L-methionine biosynthesis via de novo pathway; O-acetyl-L-homoserine from L-homoserine: step 1/1. In terms of biological role, transfers an acetyl group from acetyl-CoA to L-homoserine, forming acetyl-L-homoserine. This Mycolicibacterium paratuberculosis (strain ATCC BAA-968 / K-10) (Mycobacterium paratuberculosis) protein is Homoserine O-acetyltransferase.